The following is a 471-amino-acid chain: Cysteine--tRNA ligase (471 aa).

Position 29 (C29) interacts with Zn(2+). Positions P31–N41 match the 'HIGH' region motif. Positions 209, 234, and 238 each coordinate Zn(2+). The short motif at K266–S270 is the 'KMSKS' region element. K269 is an ATP binding site.

Belongs to the class-I aminoacyl-tRNA synthetase family. In terms of assembly, monomer. Zn(2+) is required as a cofactor.

Its subcellular location is the cytoplasm. The catalysed reaction is tRNA(Cys) + L-cysteine + ATP = L-cysteinyl-tRNA(Cys) + AMP + diphosphate. In Listeria welshimeri serovar 6b (strain ATCC 35897 / DSM 20650 / CCUG 15529 / CIP 8149 / NCTC 11857 / SLCC 5334 / V8), this protein is Cysteine--tRNA ligase.